The chain runs to 217 residues: ATP synthase F(0) complex subunit a (217 aa).

Transmembrane regions (helical) follow at residues 20–40 (MNWISTLLIILFMPNFLWILP), 70–90 (PAFLFISLFMFILLNNFFSLF), 100–120 (MVFSVTLAIPFWMFFIILSTC), 126–146 (MIAHLIPLNTPIYLAPLMTII), 166–188 (LIAGHLLMTLLNFNSLMIIIIFI), and 193–215 (MIFELCVALIQSYVFSILSSLYS).

This sequence belongs to the ATPase A chain family. As to quaternary structure, component of the ATP synthase complex composed at least of ATP5F1A/subunit alpha, ATP5F1B/subunit beta, ATP5MC1/subunit c (homooctomer), MT-ATP6/subunit a, MT-ATP8/subunit 8, ATP5ME/subunit e, ATP5MF/subunit f, ATP5MG/subunit g, ATP5MK/subunit k, ATP5MJ/subunit j, ATP5F1C/subunit gamma, ATP5F1D/subunit delta, ATP5F1E/subunit epsilon, ATP5PF/subunit F6, ATP5PB/subunit b, ATP5PD/subunit d, ATP5PO/subunit OSCP. ATP synthase complex consists of a soluble F(1) head domain (subunits alpha(3) and beta(3)) - the catalytic core - and a membrane F(0) domain - the membrane proton channel (subunits c, a, 8, e, f, g, k and j). These two domains are linked by a central stalk (subunits gamma, delta, and epsilon) rotating inside the F1 region and a stationary peripheral stalk (subunits F6, b, d, and OSCP). Interacts with DNAJC30; interaction is direct.

The protein resides in the mitochondrion inner membrane. The enzyme catalyses H(+)(in) = H(+)(out). Its function is as follows. Subunit a, of the mitochondrial membrane ATP synthase complex (F(1)F(0) ATP synthase or Complex V) that produces ATP from ADP in the presence of a proton gradient across the membrane which is generated by electron transport complexes of the respiratory chain. ATP synthase complex consist of a soluble F(1) head domain - the catalytic core - and a membrane F(1) domain - the membrane proton channel. These two domains are linked by a central stalk rotating inside the F(1) region and a stationary peripheral stalk. During catalysis, ATP synthesis in the catalytic domain of F(1) is coupled via a rotary mechanism of the central stalk subunits to proton translocation. With the subunit c (ATP5MC1), forms the proton-conducting channel in the F(0) domain, that contains two crucial half-channels (inlet and outlet) that facilitate proton movement from the mitochondrial intermembrane space (IMS) into the matrix. Protons are taken up via the inlet half-channel and released through the outlet half-channel, following a Grotthuss mechanism. The protein is ATP synthase F(0) complex subunit a of Rhopalosiphum padi (Bird cherry-oat aphid).